We begin with the raw amino-acid sequence, 144 residues long: Large ribosomal subunit protein uL16 (144 aa).

The protein belongs to the universal ribosomal protein uL16 family. As to quaternary structure, part of the 50S ribosomal subunit.

Functionally, binds 23S rRNA and is also seen to make contacts with the A and possibly P site tRNAs. This is Large ribosomal subunit protein uL16 from Caldanaerobacter subterraneus subsp. tengcongensis (strain DSM 15242 / JCM 11007 / NBRC 100824 / MB4) (Thermoanaerobacter tengcongensis).